The following is a 1104-amino-acid chain: Lon protease homolog, mitochondrial (1104 aa).

Residues 1-58 (MLPLRAFARLAQRPRLSRPTQLARSSLPRPSPSRPAAHYLALAPAPSTRFLHSSPPVL) constitute a mitochondrion transit peptide. A disordered region spans residues 8-144 (ARLAQRPRLS…PGAGGPKEVA (137 aa)). Low complexity predominate over residues 22 to 46 (LARSSLPRPSPSRPAAHYLALAPAP). Over residues 80 to 103 (KQDDQVEKPLPDAESSKSAEERAK) the composition is skewed to basic and acidic residues. Low complexity predominate over residues 104-128 (SQSSKPDIKASSSDSVSSSAPAPGS). The segment covering 129–139 (ADGGSPPGAGG) has biased composition (gly residues). Positions 155-444 (VLAIPITHRP…RALVLLKKEL (290 aa)) constitute a Lon N-terminal domain. 597–604 (GPPGVGKT) contributes to the ATP binding site. In terms of domain architecture, Lon proteolytic spans 895 to 1082 (SPPAGVSTGL…RQVLHEAFRG (188 aa)). Active-site residues include S987 and K1030.

It belongs to the peptidase S16 family. In terms of assembly, homohexamer or homoheptamer. Organized in a ring with a central cavity.

The protein localises to the mitochondrion matrix. It carries out the reaction Hydrolysis of proteins in presence of ATP.. Functionally, ATP-dependent serine protease that mediates the selective degradation of misfolded, unassembled or oxidatively damaged polypeptides as well as certain short-lived regulatory proteins in the mitochondrial matrix. May also have a chaperone function in the assembly of inner membrane protein complexes. Participates in the regulation of mitochondrial gene expression and in the maintenance of the integrity of the mitochondrial genome. Binds to mitochondrial DNA in a site-specific manner. In Cryptococcus neoformans var. neoformans serotype D (strain B-3501A) (Filobasidiella neoformans), this protein is Lon protease homolog, mitochondrial.